We begin with the raw amino-acid sequence, 364 residues long: UDP-N-acetylglucosamine--N-acetylmuramyl-(pentapeptide) pyrophosphoryl-undecaprenol N-acetylglucosamine transferase (364 aa).

Residues 10-12, asparagine 124, arginine 166, serine 196, isoleucine 252, and glutamine 297 each bind UDP-N-acetyl-alpha-D-glucosamine; that span reads TGG.

It belongs to the glycosyltransferase 28 family. MurG subfamily.

Its subcellular location is the cell membrane. It carries out the reaction di-trans,octa-cis-undecaprenyl diphospho-N-acetyl-alpha-D-muramoyl-L-alanyl-D-glutamyl-meso-2,6-diaminopimeloyl-D-alanyl-D-alanine + UDP-N-acetyl-alpha-D-glucosamine = di-trans,octa-cis-undecaprenyl diphospho-[N-acetyl-alpha-D-glucosaminyl-(1-&gt;4)]-N-acetyl-alpha-D-muramoyl-L-alanyl-D-glutamyl-meso-2,6-diaminopimeloyl-D-alanyl-D-alanine + UDP + H(+). It participates in cell wall biogenesis; peptidoglycan biosynthesis. Cell wall formation. Catalyzes the transfer of a GlcNAc subunit on undecaprenyl-pyrophosphoryl-MurNAc-pentapeptide (lipid intermediate I) to form undecaprenyl-pyrophosphoryl-MurNAc-(pentapeptide)GlcNAc (lipid intermediate II). This Ruminiclostridium cellulolyticum (strain ATCC 35319 / DSM 5812 / JCM 6584 / H10) (Clostridium cellulolyticum) protein is UDP-N-acetylglucosamine--N-acetylmuramyl-(pentapeptide) pyrophosphoryl-undecaprenol N-acetylglucosamine transferase.